A 1229-amino-acid chain; its full sequence is MSVHGRDPKKRQLRLISVAFKEASIDSPSFRASVNFFQTRVDALEDWIEKTVDFFDQKYKVSFEDFRRAKETLLSQLLPPPALLSNGFVSNQSFTPRLIDSFNKDYYDFSMKLLQIVKGDDSSHSTALLELMTTAIEPYRNVRKNFDFYQGKYDSMLASYQAIRISKTSLEPSSIKSDALQLFEVQKNYLKASLDLISAISAVKLSLDKFILESMKVLKSRSIFITKDSGRKIDLSPCINEYLDNYAIWVENSIEGSKVLDSDISNAKKQAYRYTLKRITPSSDTSDYNIRSIHSSKLLSKDTQVPPKSPEKSGWLYMKTQVGKPTREIWVRRWCFLKNAVFGMFLLSPSKTYVEETDKFGVFLTNVRYDPEEDRKFCFEVKIFGNKVTEAHDNMSKDITLVFQTSNYLDLKSWLIAFEATKKYVMSIQHDSLEYELAFKRFSPKFFEFASSTTTSIDQLITTFDKETESLYETLNCSISEYDILTLGEEKVFQFQMPTTPISTKMTQLAILSNFLTKGSWFPNAVLANIWGTTDWSEYTILPGKGKKPSSLLTIDGKRLPIRNSTIYPQYYSNELKVLDLQFKSLVFSPDQRLEKLPEELLLFKFEALWCPNKKQKFSATCFCTKDYIYCYMNSMEFICLTKISLSEIVSVEADRSSKKTLKLYDASGLQMKAIVLFSDYKLIASKLQYLLENKAIKNPNSNEEILVKFEQMEKESQEKKQEELYKIEQENSFDRKATSVSKIIKSRVTFWEMSDDASTLLNRLKKLQTEYSITYNHEYEISSKGLAHILFGDKSNAFPKCLFLARKDGEEHGKRFWYKNKDINGKSQLVRKIPFRLDMTGNFLNTGKYHRDKESKMIFATQRIVKIVDNKYYEVDLDPFFVKVPFCHLLKLSIKFVITESYDVDNHLEIKLNMTASSSSLHVLYKLEYIDSRTGKTIEKLSLAEIICQTWALKFAHSEFLLIRRVLRYYLEKIGKHGKVIKAIKLCGILGVLSNKSEEPATEKNGNSKESESMQYDIRYSCTILFLVFIKLMVYRVTNLTFVFFRILIGILLLCAEKFSRINRMMVVGLLASIMINILLSEKASVPYWSIKRAEKLFHDRLGSDKFTMQRAIYISDSDLLSSQLSVPSNNPIFEKFSEDNFNKDYQYSETRKQLAMRRNELLIELRILQDMEKQLVHDDYEKFLLEEVNKCSMVSIEMTDLWFNDTQLQNYCSICNEELEKLRPPIT.

At 1–1066 the chain is on the cytoplasmic side; it reads MSVHGRDPKK…AEKFSRINRM (1066 aa). The PH domain maps to 309 to 423; the sequence is SPEKSGWLYM…WLIAFEATKK (115 aa). Residues 771–976 enclose the VASt domain; the sequence is EYSITYNHEY…VLRYYLEKIG (206 aa). A helical membrane pass occupies residues 1067 to 1087; sequence MVVGLLASIMINILLSEKASV. The Lumenal portion of the chain corresponds to 1088-1229; that stretch reads PYWSIKRAEK…ELEKLRPPIT (142 aa). The N-linked (GlcNAc...) asparagine glycan is linked to asparagine 1206.

The protein belongs to the SIP3 family. Interacts with SNF1.

The protein resides in the endoplasmic reticulum membrane. Functionally, may be involved in sterol transfer between intracellular membranes. The protein is Membrane-anchored lipid-binding protein SIP3 of Saccharomyces cerevisiae (strain ATCC 204508 / S288c) (Baker's yeast).